We begin with the raw amino-acid sequence, 274 residues long: 2,3,4,5-tetrahydropyridine-2,6-dicarboxylate N-succinyltransferase (274 aa).

It belongs to the transferase hexapeptide repeat family.

It is found in the cytoplasm. The enzyme catalyses (S)-2,3,4,5-tetrahydrodipicolinate + succinyl-CoA + H2O = (S)-2-succinylamino-6-oxoheptanedioate + CoA. The protein operates within amino-acid biosynthesis; L-lysine biosynthesis via DAP pathway; LL-2,6-diaminopimelate from (S)-tetrahydrodipicolinate (succinylase route): step 1/3. The polypeptide is 2,3,4,5-tetrahydropyridine-2,6-dicarboxylate N-succinyltransferase (Shigella boydii serotype 18 (strain CDC 3083-94 / BS512)).